The following is a 275-amino-acid chain: Spermidine/putrescine transport system permease protein PotB (275 aa).

The helical transmembrane segment at 1 to 21 threads the bilayer; the sequence is MIVTIVGWLVLFVFLPNLMII. Topologically, residues 22-60 are periplasmic; that stretch reads GTSFLTRDDASFVKMVFTLDNYTRLLDPLYFEVLLHSLN. In terms of domain architecture, ABC transmembrane type-1 spans 55-261; sequence LLHSLNMALI…IVMGLMLLVY (207 aa). The chain crosses the membrane as a helical span at residues 61-81; that stretch reads MALIATLACLVLGYPFAWFLA. Residues 82–89 are Cytoplasmic-facing; the sequence is KLPHKVRP. A helical membrane pass occupies residues 90-110; sequence LLLFLLIVPFWTNSLIRIYGL. The Periplasmic portion of the chain corresponds to 111–135; that stretch reads KIFLSTKGYLNEFLLWLGVIDTPIR. A helical membrane pass occupies residues 136-156; sequence IMFTPSAVIIGLVYILLPFMV. Residues 157 to 187 lie on the Cytoplasmic side of the membrane; sequence MPLYSSIEKLDKPLLEAARDLGASKLQTFIR. Residues 188–208 form a helical membrane-spanning segment; sequence IIIPLTMPGIIAGCLLVMLPA. Residues 209–241 lie on the Periplasmic side of the membrane; it reads MGLFYVSDLMGGAKNLLIGNVIKVQFLNIRDWP. A helical transmembrane segment spans residues 242-262; that stretch reads FGAATSITLTIVMGLMLLVYW. Residues 263-275 lie on the Cytoplasmic side of the membrane; sequence RASRLLNKKVELE.

It belongs to the binding-protein-dependent transport system permease family. CysTW subfamily.

It localises to the cell inner membrane. Functionally, required for the activity of the bacterial periplasmic transport system of putrescine and spermidine. This chain is Spermidine/putrescine transport system permease protein PotB (potB), found in Escherichia coli (strain K12).